The primary structure comprises 150 residues: Seminal ribonuclease (150 aa).

Positions 1-26 (MALKSLVVLPLLVLVLLLVRVQPSLG) are cleaved as a signal peptide. Substrate is bound by residues Lys-33 and Arg-36. Catalysis depends on His-38, which acts as the Proton acceptor. 4 disulfide bridges follow: Cys-52–Cys-110, Cys-66–Cys-121, Cys-84–Cys-136, and Cys-91–Cys-98. Substrate is bound by residues 67-71 (KPVNT) and Lys-92. Deamidated asparagine; by deterioration is present on Asn-93. Arg-111 contributes to the substrate binding site. The Proton donor role is filled by His-145.

Belongs to the pancreatic ribonuclease family. As to quaternary structure, homodimer; disulfide-linked. Seminal plasma. Can reach 3% of the protein content of this fluid.

The protein localises to the secreted. It catalyses the reaction an [RNA] containing cytidine + H2O = an [RNA]-3'-cytidine-3'-phosphate + a 5'-hydroxy-ribonucleotide-3'-[RNA].. The enzyme catalyses an [RNA] containing uridine + H2O = an [RNA]-3'-uridine-3'-phosphate + a 5'-hydroxy-ribonucleotide-3'-[RNA].. Its activity is regulated as follows. Allosteric regulation by both substrate and reaction products. This enzyme hydrolyzes both single- and double-stranded RNA. In Bos taurus (Bovine), this protein is Seminal ribonuclease (SRN).